A 165-amino-acid chain; its full sequence is MSVKLNALTSDSYIDVSQYRDQHFKGNRYDQEKLLKQSHTLYVGNLSFYTTEEQVHELFSKSGDVKRIIIGLDKVKKTACGFCFVEYYTRAGAENAMRFINGTRLDDRIIRADWDAGFKEGRQYGRGKSGGQVRDEYRQDYDPARGGYGKLAQQHRPTEAIRNTF.

MRNA-binding positions include tyrosine 19, tyrosine 42, 111–115 (RADWD), 122–126 (RQYGR), and 132–133 (QV). Residues 39-117 (HTLYVGNLSF…RIIRADWDAG (79 aa)) enclose the RRM domain. The tract at residues 144 to 165 (ARGGYGKLAQQHRPTEAIRNTF) is disordered.

The protein belongs to the RRM NCBP2 family. As to quaternary structure, component of the nuclear cap-binding complex (CBC), a heterodimer composed of ncbp1/cbp80 and ncbp2/cbp20 that interacts with m7GpppG-capped RNA.

It is found in the nucleus. It localises to the cytoplasm. Functionally, component of the cap-binding complex (CBC), which binds co-transcriptionally to the 5' cap of pre-mRNAs and is involved in various processes such as pre-mRNA splicing, translation regulation, nonsense-mediated mRNA decay, RNA-mediated gene silencing (RNAi) by microRNAs (miRNAs) and mRNA export. The CBC complex is involved in mRNA export from the nucleus, leading to the recruitment of the mRNA export machinery to the 5' end of mRNA and to mRNA export in a 5' to 3' direction through the nuclear pore. The CBC complex is also involved in mediating U snRNA and intronless mRNAs export from the nucleus. The CBC complex is essential for a pioneer round of mRNA translation, before steady state translation when the CBC complex is replaced by cytoplasmic cap-binding protein eIF4E. The pioneer round of mRNA translation mediated by the CBC complex plays a central role in nonsense-mediated mRNA decay (NMD), NMD only taking place in mRNAs bound to the CBC complex, but not on eIF4E-bound mRNAs. The CBC complex enhances NMD in mRNAs containing at least one exon-junction complex (EJC), promoting the interaction between upf1 and upf2. The CBC complex is also involved in 'failsafe' NMD, which is independent of the EJC complex, while it does not participate in Staufen-mediated mRNA decay (SMD). During cell proliferation, the CBC complex is also involved in microRNAs (miRNAs) biogenesis via its interaction with srrt/ars2, thereby being required for miRNA-mediated RNA interference. The CBC complex also acts as a negative regulator of parn, thereby acting as an inhibitor of mRNA deadenylation. In the CBC complex, ncbp2/cbp20 recognizes and binds capped RNAs (m7GpppG-capped RNA) but requires ncbp1/cbp80 to stabilize the movement of its N-terminal loop and lock the CBC into a high affinity cap-binding state with the cap structure. The conventional cap-binding complex with NCBP2 binds both small nuclear RNA (snRNA) and messenger (mRNA) and is involved in their export from the nucleus. The sequence is that of Nuclear cap-binding protein subunit 2 (ncbp2) from Siniperca chuatsi (Mandarin fish).